The primary structure comprises 951 residues: Bifunctional glutamine synthetase adenylyltransferase/adenylyl-removing enzyme (951 aa).

Residues 1-445 (MSILPLPALP…VFDELIGDDA (445 aa)) form an adenylyl removase region. The tract at residues 454–951 (HSSYSSLWQD…VSWNKWLMGA (498 aa)) is adenylyl transferase.

It belongs to the GlnE family. Mg(2+) is required as a cofactor.

It carries out the reaction [glutamine synthetase]-O(4)-(5'-adenylyl)-L-tyrosine + phosphate = [glutamine synthetase]-L-tyrosine + ADP. The catalysed reaction is [glutamine synthetase]-L-tyrosine + ATP = [glutamine synthetase]-O(4)-(5'-adenylyl)-L-tyrosine + diphosphate. In terms of biological role, involved in the regulation of glutamine synthetase GlnA, a key enzyme in the process to assimilate ammonia. When cellular nitrogen levels are high, the C-terminal adenylyl transferase (AT) inactivates GlnA by covalent transfer of an adenylyl group from ATP to specific tyrosine residue of GlnA, thus reducing its activity. Conversely, when nitrogen levels are low, the N-terminal adenylyl removase (AR) activates GlnA by removing the adenylyl group by phosphorolysis, increasing its activity. The regulatory region of GlnE binds the signal transduction protein PII (GlnB) which indicates the nitrogen status of the cell. This is Bifunctional glutamine synthetase adenylyltransferase/adenylyl-removing enzyme from Pectobacterium atrosepticum (strain SCRI 1043 / ATCC BAA-672) (Erwinia carotovora subsp. atroseptica).